A 595-amino-acid polypeptide reads, in one-letter code: L-allo-isoleucine:holo-[CmaA peptidyl-carrier protein] ligase (595 aa).

Positions 507-582 (VVSPQAGSAV…EWVQYYATHA (76 aa)) constitute a Carrier domain. The residue at position 542 (Ser-542) is an O-(pantetheine 4'-phosphoryl)serine.

It belongs to the ATP-dependent AMP-binding enzyme family. As to quaternary structure, homodimer. Pantetheine 4'-phosphate serves as cofactor.

The catalysed reaction is L-alloisoleucine + holo-[CmaA peptidyl-carrier protein] + ATP = L-alloisoleucyl-[CmaA peptidyl-carrier protein] + AMP + diphosphate. In terms of biological role, involved in the biosynthesis of the phytotoxin coronatine (COR) which mimics the plant hormone jasmonic acid isoleucine and promotes opening of stomata for bacterial entry, bacterial growth in the apoplast, systemic susceptibility, and disease symptoms. CmaA catalyzes the adenylation of L-allo-isoleucine (via the A domain) and the attachment of L-allo-isoleucine to the 4'-phosphopantetheine arm located within the T domain of CmaA. It can also use L-isoleucine, L-leucine and L-valine as substrates. This chain is L-allo-isoleucine:holo-[CmaA peptidyl-carrier protein] ligase, found in Pseudomonas savastanoi pv. glycinea (Pseudomonas syringae pv. glycinea).